Consider the following 269-residue polypeptide: tRNA pseudouridine synthase A (269 aa).

The Nucleophile role is filled by D51. Y109 is a substrate binding site.

This sequence belongs to the tRNA pseudouridine synthase TruA family. In terms of assembly, homodimer.

It carries out the reaction uridine(38/39/40) in tRNA = pseudouridine(38/39/40) in tRNA. Functionally, formation of pseudouridine at positions 38, 39 and 40 in the anticodon stem and loop of transfer RNAs. The polypeptide is tRNA pseudouridine synthase A (Histophilus somni (strain 129Pt) (Haemophilus somnus)).